The following is a 69-amino-acid chain: Probable cold shock protein y4cH (69 aa).

Residues 5 to 65 (GTVKWFNATK…DRKSGKMSAD (61 aa)) enclose the CSD domain.

The protein resides in the cytoplasm. The sequence is that of Probable cold shock protein y4cH from Sinorhizobium fredii (strain NBRC 101917 / NGR234).